We begin with the raw amino-acid sequence, 169 residues long: ATP synthase subunit b (169 aa).

The helical transmembrane segment at 3 to 23 (IKILLLVLPFFAFASEHGGVN) threads the bilayer.

It belongs to the ATPase B chain family. In terms of assembly, F-type ATPases have 2 components, F(1) - the catalytic core - and F(0) - the membrane proton channel. F(1) has five subunits: alpha(3), beta(3), gamma(1), delta(1), epsilon(1). F(0) has three main subunits: a(1), b(2) and c(10-14). The alpha and beta chains form an alternating ring which encloses part of the gamma chain. F(1) is attached to F(0) by a central stalk formed by the gamma and epsilon chains, while a peripheral stalk is formed by the delta and b chains.

It is found in the cell inner membrane. F(1)F(0) ATP synthase produces ATP from ADP in the presence of a proton or sodium gradient. F-type ATPases consist of two structural domains, F(1) containing the extramembraneous catalytic core and F(0) containing the membrane proton channel, linked together by a central stalk and a peripheral stalk. During catalysis, ATP synthesis in the catalytic domain of F(1) is coupled via a rotary mechanism of the central stalk subunits to proton translocation. Functionally, component of the F(0) channel, it forms part of the peripheral stalk, linking F(1) to F(0). The chain is ATP synthase subunit b from Campylobacter curvus (strain 525.92).